The sequence spans 2201 residues: Tenascin (2201 aa).

Positions 1-22 are cleaved as a signal peptide; it reads MGAMTQLLAGVFLAFLALATEG. The N-linked (GlcNAc...) asparagine glycan is linked to Asn-38. A phosphoserine mark is found at Ser-65 and Ser-70. A Phosphoserine; by FAM20C modification is found at Ser-72. Ser-72 carries an O-linked (Xyl...) (chondroitin sulfate) serine glycan. A coiled-coil region spans residues 118–145; that stretch reads DVKELLSRLEELENLVSSLREQCTAGAG. N-linked (GlcNAc...) asparagine glycans are attached at residues Asn-166 and Asn-184. In terms of domain architecture, EGF-like 1; incomplete spans 174–186; that stretch reads CVCEPGWKGPNCS. EGF-like domains lie at 186–217, 217–248, 248–280, 280–311, 311–342, 342–373, 373–404, 404–435, 435–466, 466–497, 497–528, 528–559, 559–590, and 590–621; these read SEPE…EDCS, SQLA…ADCS, SREI…DDCN, NKPL…EDCS, SELI…EDCG, GKPT…VDCS, SEKR…ADCG, GELK…EDCS, SQLR…YDCS, SDMS…EDCR, RDRQ…PDCA, AELS…KDCK, KEQR…LDCG, and GQHS…EDCS. Cystine bridges form between Cys-190–Cys-200, Cys-194–Cys-205, Cys-207–Cys-216, Cys-221–Cys-231, Cys-225–Cys-236, Cys-238–Cys-247, Cys-252–Cys-263, Cys-256–Cys-268, Cys-270–Cys-279, Cys-284–Cys-294, Cys-288–Cys-299, Cys-301–Cys-310, Cys-315–Cys-325, Cys-319–Cys-330, Cys-332–Cys-341, Cys-346–Cys-356, Cys-350–Cys-361, Cys-363–Cys-372, Cys-377–Cys-387, Cys-381–Cys-392, Cys-394–Cys-403, Cys-408–Cys-418, Cys-412–Cys-423, Cys-425–Cys-434, Cys-439–Cys-449, Cys-443–Cys-454, Cys-456–Cys-465, Cys-470–Cys-480, Cys-474–Cys-485, Cys-487–Cys-496, Cys-501–Cys-511, Cys-505–Cys-516, Cys-518–Cys-527, Cys-532–Cys-542, Cys-536–Cys-547, Cys-549–Cys-558, Cys-563–Cys-573, Cys-567–Cys-578, Cys-580–Cys-589, Cys-594–Cys-604, Cys-598–Cys-609, and Cys-611–Cys-620. Asn-327 is a glycosylation site (N-linked (GlcNAc...) asparagine). Fibronectin type-III domains are found at residues 625 to 715, 716 to 804, 805 to 894, 895 to 990, 991 to 1075, 1076 to 1165, 1167 to 1256, 1258 to 1350, 1351 to 1439, 1440 to 1531, 1533 to 1621, 1622 to 1711, 1712 to 1801, 1802 to 1888, and 1889 to 1977; these read PPKD…LPAP, EGLK…TRLD, APSQ…TGLD, APRN…TPKD, LQVS…EQAP, ELEN…TGET, NLGE…TEEV, DMGN…LPQL, GDLA…AKEP, EIGN…ALPL, ENLT…EAEP, EVDN…TAMG, SPKE…ALDG, PSGL…TDLD, and SPRD…IGLL. Asn-788 carries an N-linked (GlcNAc...) asparagine glycan. Thr-905 bears the Phosphothreonine mark. 16 N-linked (GlcNAc...) asparagine glycosylation sites follow: Asn-1018, Asn-1034, Asn-1079, Asn-1093, Asn-1119, Asn-1184, Asn-1210, Asn-1261, Asn-1275, Asn-1301, Asn-1366, Asn-1392, Asn-1445, Asn-1455, Asn-1485, and Asn-1534. A glycan (N-linked (GlcNAc...) asparagine) is linked at Asn-1809. A Fibrinogen C-terminal domain is found at 1975–2190; it reads GLLYPFPKDC…FAEMKLRPSN (216 aa). N-linked (GlcNAc...) asparagine glycosylation is present at Asn-2162.

It belongs to the tenascin family. As to quaternary structure, homohexamer; disulfide-linked. A homotrimer may be formed in the triple coiled-coil region and may be stabilized by disulfide rings at both ends. Two of such half-hexabrachions may be disulfide linked within the central globule. Interacts with CSPG4. Interacts (via the 3rd fibronectin type-III domain) with integrin ITGA9:ITGB1. Detected in fibroblasts (at protein level).

Its subcellular location is the secreted. It localises to the extracellular space. The protein localises to the extracellular matrix. In terms of biological role, extracellular matrix protein implicated in guidance of migrating neurons as well as axons during development, synaptic plasticity as well as neuronal regeneration. Promotes neurite outgrowth from cortical neurons grown on a monolayer of astrocytes. Ligand for integrins alpha-8/beta-1, alpha-9/beta-1, alpha-V/beta-3 and alpha-V/beta-6. In tumors, stimulates angiogenesis by elongation, migration and sprouting of endothelial cells. The protein is Tenascin (TNC) of Homo sapiens (Human).